Consider the following 429-residue polypeptide: Glutamate-1-semialdehyde 2,1-aminomutase (429 aa).

N6-(pyridoxal phosphate)lysine is present on K265.

It belongs to the class-III pyridoxal-phosphate-dependent aminotransferase family. HemL subfamily. As to quaternary structure, homodimer. Pyridoxal 5'-phosphate serves as cofactor.

It is found in the cytoplasm. The enzyme catalyses (S)-4-amino-5-oxopentanoate = 5-aminolevulinate. It participates in porphyrin-containing compound metabolism; protoporphyrin-IX biosynthesis; 5-aminolevulinate from L-glutamyl-tRNA(Glu): step 2/2. The sequence is that of Glutamate-1-semialdehyde 2,1-aminomutase from Shewanella pealeana (strain ATCC 700345 / ANG-SQ1).